Here is a 100-residue protein sequence, read N- to C-terminus: Small ribosomal subunit protein uS14c (100 aa).

This sequence belongs to the universal ribosomal protein uS14 family. Part of the 30S ribosomal subunit.

It localises to the plastid. It is found in the chloroplast. In terms of biological role, binds 16S rRNA, required for the assembly of 30S particles. The protein is Small ribosomal subunit protein uS14c of Chlorella vulgaris (Green alga).